The primary structure comprises 126 residues: Urease subunit beta (126 aa).

The protein belongs to the urease beta subunit family. As to quaternary structure, heterotrimer of UreA (gamma), UreB (beta) and UreC (alpha) subunits. Three heterotrimers associate to form the active enzyme.

It localises to the cytoplasm. The enzyme catalyses urea + 2 H2O + H(+) = hydrogencarbonate + 2 NH4(+). The protein operates within nitrogen metabolism; urea degradation; CO(2) and NH(3) from urea (urease route): step 1/1. The sequence is that of Urease subunit beta from Sporosarcina pasteurii (Bacillus pasteurii).